The chain runs to 976 residues: DNA-directed RNA polymerase 1, mitochondrial (976 aa).

The transit peptide at 1–42 (MWRNILGRASLRKVKFLSDSSSSGTHYPVNRVRGILSSVNLS) directs the protein to the mitochondrion. Catalysis depends on residues Asp-677, Lys-752, and Asp-909.

This sequence belongs to the phage and mitochondrial RNA polymerase family.

It is found in the mitochondrion. It catalyses the reaction RNA(n) + a ribonucleoside 5'-triphosphate = RNA(n+1) + diphosphate. DNA-dependent RNA polymerase catalyzes the transcription of DNA into RNA using the four ribonucleoside triphosphates as substrates. This is DNA-directed RNA polymerase 1, mitochondrial (RPOT1) from Arabidopsis thaliana (Mouse-ear cress).